Consider the following 426-residue polypeptide: Glutamate-1-semialdehyde 2,1-aminomutase (426 aa).

Position 265 is an N6-(pyridoxal phosphate)lysine (Lys265).

The protein belongs to the class-III pyridoxal-phosphate-dependent aminotransferase family. HemL subfamily. As to quaternary structure, homodimer. Pyridoxal 5'-phosphate is required as a cofactor.

It localises to the cytoplasm. It carries out the reaction (S)-4-amino-5-oxopentanoate = 5-aminolevulinate. It functions in the pathway porphyrin-containing compound metabolism; protoporphyrin-IX biosynthesis; 5-aminolevulinate from L-glutamyl-tRNA(Glu): step 2/2. The chain is Glutamate-1-semialdehyde 2,1-aminomutase from Sodalis glossinidius (strain morsitans).